A 915-amino-acid chain; its full sequence is MQQQHLFRLNILCLSLMTALPAYAENVQAGQAQEKQLDTIQVKAKKQKTRRDNEVTGLGKLVKTADTLSKEQVLDIRDLTRYDPGIAVVEQGRGASSGYSIRGMDKNRVSLTVDGLAQIQSYTAQAALGGTRTAGSSGAINEIEYENVKAVEISKGSNSVEQGSGALAGSVAFQTKTADDVIGEGRQWGIQSKTAYSGKNRGLTQSIALAGRIGGAEALLIRTGRHAGEIRAHEAAGRGVQSFNRLAPVDDGSKYAYFIVEEECKNGGHEKCKANPKKDVVGEDKRQTVSTRDYTGPNRFLADPLSYESRSWLFRPGFRFENKRHYIGGILERTQQTFDTRDMTVPAFLTKAVFDANQKQAGSLRGNGKYAGNHKYGGLFTSGENNAPVGAEYGTGVFYDETHTKSRYGLEYVYTNADKDTWADYARLSYDRQGIGLDNHFQQTHCSADGSDKYCRPSADKPFSYYKSDRVIYGESHKLLQAAFKKSFDTAKIRHNLSVNLGYDRFGSNLRHQDYYYQSANRAYSLKTPPQNNGKKTSPNGREKNPYWVSIGRGNVVTRQICLFGNNTYTDCTPRSINGKSYYAAVRDNVRLGRWADVGAGLRYDYRSTHSDDGSVSTGTHRTLSWNAGIVLKPADWLDLTYRTSTGFRLPSFAEMYGWRSGDKIKAVKIDPEKSFNKEAGIVFKGDFGNLEASWFNNAYRDLIVRGYEAQIKDGKEQVKGNPAYLNAQSARITGINILGKIDWNGVWDKLPEGWYSTFAYNRVRVRDIKKRADRTDIQSHLFDAIQPSRYVVGSGYDQPEGKWGVNGMLTYSKAKEITELLGSRALLNGNSRNTKATARRTRPWYIVDVSGYYTVKKHFTLRAGVYNLLNHRYVTWENVRQTAAGAVNQHKNVGVYNRYAAPGRNYTFSLEMKF.

The first 24 residues, 1–24 (MQQQHLFRLNILCLSLMTALPAYA), serve as a signal peptide directing secretion. The TonB box signature appears at 38–45 (DTIQVKAK). In terms of domain architecture, TBDR plug spans 51–176 (RDNEVTGLGK…LAGSVAFQTK (126 aa)). In terms of domain architecture, TBDR beta-barrel spans 187–915 (QWGIQSKTAY…NYTFSLEMKF (729 aa)). Polar residues predominate over residues 526–540 (LKTPPQNNGKKTSPN). Positions 526–545 (LKTPPQNNGKKTSPNGREKN) are disordered. A TonB C-terminal box motif is present at residues 898-915 (NRYAAPGRNYTFSLEMKF).

This sequence belongs to the TonB-dependent receptor family. Binds both human apo- and holo-transferrin (TF), via the TF C-terminus. Forms a large complex with TF and TbpB.

The protein localises to the cell outer membrane. In terms of biological role, neisseria acquires iron by extracting it from serum transferrin (TF) in its human host. Acts as a TF receptor and is required for TF utilization. Binds both apo- and holo-TF, via the TF C-terminus. In Neisseria gonorrhoeae, this protein is Transferrin-binding protein A.